Here is a 154-residue protein sequence, read N- to C-terminus: Prefoldin subunit alpha (154 aa).

It belongs to the prefoldin alpha subunit family. In terms of assembly, heterohexamer of two alpha and four beta subunits.

Its subcellular location is the cytoplasm. In terms of biological role, molecular chaperone capable of stabilizing a range of proteins. Seems to fulfill an ATP-independent, HSP70-like function in archaeal de novo protein folding. The protein is Prefoldin subunit alpha of Hyperthermus butylicus (strain DSM 5456 / JCM 9403 / PLM1-5).